The chain runs to 210 residues: Cancer/testis antigen 2 (210 aa).

Composition is skewed to gly residues over residues 1 to 47 and 56 to 66; these read MQAE…GPRG and PRGGAPRGPHG. Disordered stretches follow at residues 1–80 and 154–197; these read MQAE…PCGA and GLGS…DGCR. The segment covering 163–177 has biased composition (basic and acidic residues); it reads QKARDLRTPKHKVSE.

The protein belongs to the CTAG/PCC1 family. In terms of tissue distribution, testis and very low level in placenta and in some uterus samples. Observed in 25-50% of tumor samples of melanomas, non-small-cell lung carcinomas, bladder, prostate and head and neck cancers.

This is Cancer/testis antigen 2 (CTAG2) from Homo sapiens (Human).